Consider the following 147-residue polypeptide: Large ribosomal subunit protein uL15 (147 aa).

The segment at 1-46 (MSIRLENLSYTPGARKEKHRKGRGHAAGKGKQAGRGQSGQKKRSTV) is disordered. The segment covering 16-28 (KEKHRKGRGHAAG) has biased composition (basic residues).

Belongs to the universal ribosomal protein uL15 family. In terms of assembly, part of the 50S ribosomal subunit.

In terms of biological role, binds to the 23S rRNA. In Mesomycoplasma hyopneumoniae (strain 232) (Mycoplasma hyopneumoniae), this protein is Large ribosomal subunit protein uL15.